The chain runs to 71 residues: Gas vesicle protein A (71 aa).

The tract at residues 12 to 22 (LAEVIDRILDK) is alpha helix 1. The beta-strand 1 stretch occupies residues 26–34 (VDAWVRVSL). A beta turn region spans residues 35 to 37 (VGI). The beta-strand 2 stretch occupies residues 38-46 (ELLAIEARI). Residues 51-70 (VETYLKYAEAVGLTQSAAVP) form an alpha helix 2 region.

This sequence belongs to the gas vesicle GvpA family. As to quaternary structure, the gas vesicle shell is 2 nm thick and consists of a single layer of this protein. It forms helical ribs nearly perpendicular to the long axis of the vesicle.

It localises to the gas vesicle shell. Functionally, gas vesicles are hollow, gas filled proteinaceous nanostructures found in some microorganisms. During planktonic growth they allow positioning of the organism at a favorable depth for light or nutrient acquisition. GvpA forms the protein shell. The chain is Gas vesicle protein A from Microchaete diplosiphon (Fremyella diplosiphon).